The following is a 125-amino-acid chain: Succinate dehydrogenase cytochrome b556 subunit (125 aa).

At 1 to 22 (MNAKRPVNLDLTKFHFPPMAIL) the chain is on the cytoplasmic side. A helical transmembrane segment spans residues 23–48 (SIGHRISGFVLFLCMPLMFYLLHRAT). The Periplasmic portion of the chain corresponds to 49–65 (ASAESFYHLHQLLLHNG). Residues 66-86 (WIKLAVWIMLSATLFHLFAGI) traverse the membrane as a helical segment. Residue His81 participates in heme binding. Residues 87-104 (RHLAMDLGFWESVPEGRI) are Cytoplasmic-facing. Residues 105-125 (SAYTVFVVSFIAIVLAGVWIW) form a helical membrane-spanning segment.

This sequence belongs to the cytochrome b560 family. As to quaternary structure, part of an enzyme complex containing four subunits: a flavoprotein, an iron-sulfur protein, plus two membrane-anchoring proteins, SdhC and SdhD. The complex can form homotrimers. Heme serves as cofactor.

It localises to the cell inner membrane. It functions in the pathway carbohydrate metabolism; tricarboxylic acid cycle. Its function is as follows. Membrane-anchoring subunit of succinate dehydrogenase (SDH). This chain is Succinate dehydrogenase cytochrome b556 subunit (sdhC), found in Coxiella burnetii (strain RSA 493 / Nine Mile phase I).